Reading from the N-terminus, the 616-residue chain is Sulfite reductase [NADPH] flavoprotein alpha-component (616 aa).

The Flavodoxin-like domain maps to 80-218 (LTIIFASQTG…SAAQWRKQAL (139 aa)). FMN is bound by residues 86-91 (SQTGNA), 133-136 (STNG), and 169-178 (LGDSSYEFFC). In terms of domain architecture, FAD-binding FR-type spans 251-465 (QKPYAATLLT…VENNNNFKLP (215 aa)). Residues Thr-339, Gly-373, 403–406 (RLYS), 421–423 (TVG), Tyr-427, and 436–439 (GGAS) contribute to the FAD site. NADP(+) is bound by residues 536 to 537 (SR), 542 to 546 (KVYVQ), and Asp-578. Position 616 (Tyr-616) interacts with FAD.

It belongs to the NADPH-dependent sulphite reductase flavoprotein subunit CysJ family. The protein in the N-terminal section; belongs to the flavodoxin family. This sequence in the C-terminal section; belongs to the flavoprotein pyridine nucleotide cytochrome reductase family. Alpha(8)-beta(8). The alpha component is a flavoprotein, the beta component is a hemoprotein. Requires FAD as cofactor. The cofactor is FMN.

The catalysed reaction is hydrogen sulfide + 3 NADP(+) + 3 H2O = sulfite + 3 NADPH + 4 H(+). It functions in the pathway sulfur metabolism; hydrogen sulfide biosynthesis; hydrogen sulfide from sulfite (NADPH route): step 1/1. Its function is as follows. Component of the sulfite reductase complex that catalyzes the 6-electron reduction of sulfite to sulfide. This is one of several activities required for the biosynthesis of L-cysteine from sulfate. The flavoprotein component catalyzes the electron flow from NADPH -&gt; FAD -&gt; FMN to the hemoprotein component. The sequence is that of Sulfite reductase [NADPH] flavoprotein alpha-component from Vibrio vulnificus (strain CMCP6).